The following is a 1734-amino-acid chain: Protein TIC 214 (1734 aa).

6 helical membrane passes run 19–39 (IINSVVVVGLYYGFLTTFSIG), 68–88 (FIAGQLMMFISIYYAPLHLAL), 91–111 (PHTITVLALPYLLFHFFWNNH), 133–153 (VFLNNLIFQLFNHFILPSSML), 176–196 (VGWLIGHILFMKWVGLVLVWI), and 227–247 (IFSILLFITCVYYLGRMPSPI). The stretch at 1433–1485 (NLNNEEKELADEVELESDNEKQINPESALSNQEKTIQEIYAESKKKKRQNKKQ) forms a coiled coil.

Belongs to the TIC214 family. In terms of assembly, part of the Tic complex.

The protein resides in the plastid. Its subcellular location is the chloroplast inner membrane. Functionally, involved in protein precursor import into chloroplasts. May be part of an intermediate translocation complex acting as a protein-conducting channel at the inner envelope. This Lepidium virginicum (Virginia pepperweed) protein is Protein TIC 214.